The sequence spans 594 residues: Chondroitin sulfate proteoglycan 5 (594 aa).

Residues 1-12 (MGVGGTSASDTA) show a composition bias toward polar residues. The first 18 residues, 1–18 (MGVGGTSASDTALSLCPT), serve as a signal peptide directing secretion. Disordered regions lie at residues 1-325 (MGVG…PWGL) and 343-418 (TTSF…SECR). Topologically, residues 19–481 (APEWPPRNGS…AIVTDFQVLC (463 aa)) are extracellular. 2 N-linked (GlcNAc...) asparagine glycosylation sites follow: asparagine 26 and asparagine 44. A compositionally biased stretch (low complexity) spans 140–181 (SPGLGLSSPGPNLGLPSLDLPNPNLGLPDPNLGLPNPSLGLP). Pro residues-rich tracts occupy residues 182 to 195 (SPGP…PNPN) and 219 to 229 (IPLPSPSPGPG). Low complexity predominate over residues 248–259 (PQPSSSPAPAQR). A compositionally biased stretch (gly residues) spans 298–310 (GGHGPGGGHGAGG). The interaction with TNC and TNR stretch occupies residues 338–377 (ADFYPTTSFYAEGDDDAEEELEEDEEEEEEEDGGLEDENG). Acidic residues predominate over residues 349 to 375 (EGDDDAEEELEEDEEEEEEEDGGLEDE). N-linked (GlcNAc...) asparagine glycosylation is found at asparagine 413 and asparagine 425. Positions 429–471 (RSVCDLVPSYCHNGGQCYLVESHGAFCRCNTQDYTWHKGTRCE) constitute an EGF-like domain. 3 disulfides stabilise this stretch: cysteine 432/cysteine 445, cysteine 439/cysteine 455, and cysteine 457/cysteine 470. Residues 482–502 (VAVGSAALVLLLLFMLTVFFA) form a helical membrane-spanning segment. At 503 to 594 (KKLYLLKTEN…GVPCLHNNLG (92 aa)) the chain is on the cytoplasmic side. A disordered region spans residues 535–594 (TIAEGSHPNDDPGAPHKLQDPLKPGLKDEEPLSILSTAPEEGSKGEPGGCGVPCLHNNLG). Residues 541 to 564 (HPNDDPGAPHKLQDPLKPGLKDEE) are compositionally biased toward basic and acidic residues.

In terms of assembly, binds TNC and TNR. The 80 kDa form but not the 140 kDa form can bind TNC and TNR when expressed at the cell surface. Post-translationally, different forms exist: the 140 kDa form (also reported as 130 kDa), which probably consists of the entire protein, and the 38 and 80 kDa forms, which are probably cleaved in their N-terminus. Increase in synaptic activity, results in shedding of the extracellular domain and expression at the cell surface of a 38 kDa form. A form of 200 kDa has also been reported, which is probably hyperglycosylated. N-glycosylated. In terms of processing, O-glycosylated; contains chondroitin sulfate glycans. Part-time proteoglycan, the 200 kDa form is the only one containing chondroitin sulfate glycans. As to expression, expressed in astroglial and neuronal surfaces in different parts of the embryonic brain. Expressed in adult brain and retina (at protein level).

It localises to the cell membrane. Functionally, may function as a growth and differentiation factor involved in neuritogenesis and more particularly in neurite extension. The protein is Chondroitin sulfate proteoglycan 5 (CSPG5) of Gallus gallus (Chicken).